We begin with the raw amino-acid sequence, 337 residues long: Protein RETICULATA-RELATED 3, chloroplastic (337 aa).

The N-terminal 59 residues, 1-59, are a transit peptide targeting the chloroplast; that stretch reads MAAMAAKLQLSAKSDQSSVRLPRVINLSRDPTTRVSFPRNGSVCSLHTNFSSPHLAKPC. A compositionally biased stretch (gly residues) spans 70-89; that stretch reads NNGGGSGSGGGGGGFGGSGG. The disordered stretch occupies residues 70 to 96; sequence NNGGGSGSGGGGGGFGGSGGEASEESS. Transmembrane regions (helical) follow at residues 151–171 and 216–236; these read FVFS…YMLA and VFAS…NGLI.

The protein belongs to the RETICULATA family. In terms of tissue distribution, expressed in root meristem, root vasculature, distal region of young leaf primordia, leaf bundle sheath cells, hydathodes and pollen grains.

The protein localises to the plastid. The protein resides in the chloroplast membrane. Its function is as follows. May play a role in leaf development. Required for leaf mesophyll cell division in the early stages of leaf organogenesis. The protein is Protein RETICULATA-RELATED 3, chloroplastic of Arabidopsis thaliana (Mouse-ear cress).